The primary structure comprises 122 residues: Ribonuclease P protein component (122 aa).

It belongs to the RnpA family. In terms of assembly, consists of a catalytic RNA component (M1 or rnpB) and a protein subunit.

It carries out the reaction Endonucleolytic cleavage of RNA, removing 5'-extranucleotides from tRNA precursor.. Its function is as follows. RNaseP catalyzes the removal of the 5'-leader sequence from pre-tRNA to produce the mature 5'-terminus. It can also cleave other RNA substrates such as 4.5S RNA. The protein component plays an auxiliary but essential role in vivo by binding to the 5'-leader sequence and broadening the substrate specificity of the ribozyme. This Lactobacillus helveticus (strain DPC 4571) protein is Ribonuclease P protein component.